Consider the following 132-residue polypeptide: Small ribosomal subunit protein uS8 (132 aa).

Belongs to the universal ribosomal protein uS8 family. In terms of assembly, part of the 30S ribosomal subunit. Contacts proteins S5 and S12.

In terms of biological role, one of the primary rRNA binding proteins, it binds directly to 16S rRNA central domain where it helps coordinate assembly of the platform of the 30S subunit. The protein is Small ribosomal subunit protein uS8 of Granulibacter bethesdensis (strain ATCC BAA-1260 / CGDNIH1).